A 402-amino-acid chain; its full sequence is Argininosuccinate synthase (402 aa).

9–17 (AYSGGLDTS) contributes to the ATP binding site. Tyr-86 lines the L-citrulline pocket. ATP is bound at residue Gly-116. L-aspartate is bound by residues Thr-118, Asn-122, and Asp-123. An L-citrulline-binding site is contributed by Asn-122. Residues Arg-126, Ser-174, Ser-183, Glu-259, and Tyr-271 each contribute to the L-citrulline site.

The protein belongs to the argininosuccinate synthase family. Type 1 subfamily. As to quaternary structure, homotetramer.

Its subcellular location is the cytoplasm. It carries out the reaction L-citrulline + L-aspartate + ATP = 2-(N(omega)-L-arginino)succinate + AMP + diphosphate + H(+). The protein operates within amino-acid biosynthesis; L-arginine biosynthesis; L-arginine from L-ornithine and carbamoyl phosphate: step 2/3. The protein is Argininosuccinate synthase of Anoxybacillus flavithermus (strain DSM 21510 / WK1).